The primary structure comprises 438 residues: Coenzyme A disulfide reductase (438 aa).

8-33 is an FAD binding site; the sequence is GAVAGGATCASQIRRLDKESDIIIFE. Substrate contacts are provided by threonine 15, glutamine 19, arginine 22, serine 39, and asparagine 42. The Nucleophile role is filled by cysteine 43. Cysteine 43 (redox-active) is an active-site residue. Lysine 71 contacts substrate. 151 to 166 serves as a coordination point for NADP(+); it reads VLVVGAGYVSLEVLEN. Residue 267 to 277 coordinates FAD; that stretch reads TNVPNIYAIGD. Position 299 (histidine 299) interacts with substrate. Residue tyrosine 419 coordinates FAD. Residue lysine 427 coordinates substrate.

This sequence belongs to the class-III pyridine nucleotide-disulfide oxidoreductase family. As to quaternary structure, homodimer. FAD is required as a cofactor.

It catalyses the reaction NADP(+) + 2 CoA = CoA-disulfide + NADPH + H(+). Functionally, catalyzes specifically the NADPH-dependent reduction of coenzyme A disulfide. This Staphylococcus aureus (strain bovine RF122 / ET3-1) protein is Coenzyme A disulfide reductase.